A 354-amino-acid chain; its full sequence is V-type proton ATPase subunit C (354 aa).

It belongs to the V-ATPase C subunit family. As to quaternary structure, V-ATPase is a heteromultimeric enzyme composed of a peripheral catalytic V1 complex (components A to H) attached to an integral membrane V0 proton pore complex (components: a, c, c', c'' and d).

It localises to the vacuole membrane. In terms of biological role, subunit of the peripheral V1 complex of vacuolar ATPase. Subunit C is necessary for the assembly of the catalytic sector of the enzyme and is likely to have a specific function in its catalytic activity. V-ATPase is responsible for acidifying a variety of intracellular compartments in eukaryotic cells. The chain is V-type proton ATPase subunit C (VATC) from Hordeum vulgare (Barley).